The sequence spans 139 residues: MRVKGGTVSRARRKKMVKLAKGYRGQRRINFKVAKQQVWKSYLYAYRDRKNTKRNFRKLWIARINAAARMNGLSYSKLMHGLTLAGVELNRKMLAEIAVTDFDTFAKLADQAKAALASDNVLVQERVAATLETTVKVDR.

This sequence belongs to the bacterial ribosomal protein bL20 family.

Binds directly to 23S ribosomal RNA and is necessary for the in vitro assembly process of the 50S ribosomal subunit. It is not involved in the protein synthesizing functions of that subunit. The chain is Large ribosomal subunit protein bL20 from Leuconostoc citreum (strain KM20).